Here is a 96-residue protein sequence, read N- to C-terminus: DNA-directed RNA polymerase subunit Rpo11 (96 aa).

It belongs to the archaeal Rpo11/eukaryotic RPB11/RPC19 RNA polymerase subunit family. As to quaternary structure, part of the RNA polymerase complex.

Its subcellular location is the cytoplasm. It catalyses the reaction RNA(n) + a ribonucleoside 5'-triphosphate = RNA(n+1) + diphosphate. DNA-dependent RNA polymerase (RNAP) catalyzes the transcription of DNA into RNA using the four ribonucleoside triphosphates as substrates. The chain is DNA-directed RNA polymerase subunit Rpo11 from Methanococcus maripaludis (strain C6 / ATCC BAA-1332).